The primary structure comprises 303 residues: Methionyl-tRNA formyltransferase (303 aa).

Position 110–113 (S110–P113) interacts with (6S)-5,6,7,8-tetrahydrofolate.

It belongs to the Fmt family.

The catalysed reaction is L-methionyl-tRNA(fMet) + (6R)-10-formyltetrahydrofolate = N-formyl-L-methionyl-tRNA(fMet) + (6S)-5,6,7,8-tetrahydrofolate + H(+). In terms of biological role, attaches a formyl group to the free amino group of methionyl-tRNA(fMet). The formyl group appears to play a dual role in the initiator identity of N-formylmethionyl-tRNA by promoting its recognition by IF2 and preventing the misappropriation of this tRNA by the elongation apparatus. This is Methionyl-tRNA formyltransferase from Ehrlichia ruminantium (strain Welgevonden).